The following is a 425-amino-acid chain: Protein-glutamate methylesterase/protein-glutamine glutaminase (425 aa).

The Response regulatory domain occupies 22-140; that stretch reads RVMVVDDSVV…EVAAADIFRH (119 aa). The residue at position 73 (aspartate 73) is a 4-aspartylphosphate. Disordered regions lie at residues 150–174 and 203–223; these read AAKR…SNAS and VQRE…RPQP. One can recognise a CheB-type methylesterase domain in the interval 221-417; sequence PQPTLRSFSA…PLQQIAPKLV (197 aa). Catalysis depends on residues serine 241, histidine 269, and aspartate 365.

This sequence belongs to the CheB family. Phosphorylated by CheA. Phosphorylation of the N-terminal regulatory domain activates the methylesterase activity.

It is found in the cytoplasm. It catalyses the reaction [protein]-L-glutamate 5-O-methyl ester + H2O = L-glutamyl-[protein] + methanol + H(+). The catalysed reaction is L-glutaminyl-[protein] + H2O = L-glutamyl-[protein] + NH4(+). Its function is as follows. Involved in chemotaxis. Part of a chemotaxis signal transduction system that modulates chemotaxis in response to various stimuli. Catalyzes the demethylation of specific methylglutamate residues introduced into the chemoreceptors (methyl-accepting chemotaxis proteins or MCP) by CheR. Also mediates the irreversible deamidation of specific glutamine residues to glutamic acid. The sequence is that of Protein-glutamate methylesterase/protein-glutamine glutaminase from Nitrobacter winogradskyi (strain ATCC 25391 / DSM 10237 / CIP 104748 / NCIMB 11846 / Nb-255).